We begin with the raw amino-acid sequence, 126 residues long: Large ribosomal subunit protein uL22 (126 aa).

Belongs to the universal ribosomal protein uL22 family. In terms of assembly, part of the 50S ribosomal subunit.

In terms of biological role, this protein binds specifically to 23S rRNA; its binding is stimulated by other ribosomal proteins, e.g. L4, L17, and L20. It is important during the early stages of 50S assembly. It makes multiple contacts with different domains of the 23S rRNA in the assembled 50S subunit and ribosome. The globular domain of the protein is located near the polypeptide exit tunnel on the outside of the subunit, while an extended beta-hairpin is found that lines the wall of the exit tunnel in the center of the 70S ribosome. The chain is Large ribosomal subunit protein uL22 from Paracoccus denitrificans (strain Pd 1222).